Here is a 502-residue protein sequence, read N- to C-terminus: Glutamate--tRNA ligase (502 aa).

The 'HIGH' region motif lies at Pro9–Thr19. The 'KMSKS' region motif lies at Lys250–Arg254. Lys253 is an ATP binding site.

This sequence belongs to the class-I aminoacyl-tRNA synthetase family. Glutamate--tRNA ligase type 1 subfamily. In terms of assembly, monomer.

It is found in the cytoplasm. It catalyses the reaction tRNA(Glu) + L-glutamate + ATP = L-glutamyl-tRNA(Glu) + AMP + diphosphate. Its function is as follows. Catalyzes the attachment of glutamate to tRNA(Glu) in a two-step reaction: glutamate is first activated by ATP to form Glu-AMP and then transferred to the acceptor end of tRNA(Glu). The protein is Glutamate--tRNA ligase of Acinetobacter baylyi (strain ATCC 33305 / BD413 / ADP1).